The primary structure comprises 380 residues: Lipid-A-disaccharide synthase (380 aa).

This sequence belongs to the LpxB family.

It carries out the reaction a lipid X + a UDP-2-N,3-O-bis[(3R)-3-hydroxyacyl]-alpha-D-glucosamine = a lipid A disaccharide + UDP + H(+). Its pathway is bacterial outer membrane biogenesis; LPS lipid A biosynthesis. Condensation of UDP-2,3-diacylglucosamine and 2,3-diacylglucosamine-1-phosphate to form lipid A disaccharide, a precursor of lipid A, a phosphorylated glycolipid that anchors the lipopolysaccharide to the outer membrane of the cell. This is Lipid-A-disaccharide synthase from Photobacterium profundum (strain SS9).